We begin with the raw amino-acid sequence, 217 residues long: tRNA (guanine-N(7)-)-methyltransferase (217 aa).

Positions 44, 69, 96, and 118 each coordinate S-adenosyl-L-methionine. Asp-118 is an active-site residue. Substrate contacts are provided by residues Lys-122, Asp-154, and 191–194 (TEYE).

It belongs to the class I-like SAM-binding methyltransferase superfamily. TrmB family.

The catalysed reaction is guanosine(46) in tRNA + S-adenosyl-L-methionine = N(7)-methylguanosine(46) in tRNA + S-adenosyl-L-homocysteine. Its pathway is tRNA modification; N(7)-methylguanine-tRNA biosynthesis. Functionally, catalyzes the formation of N(7)-methylguanine at position 46 (m7G46) in tRNA. The chain is tRNA (guanine-N(7)-)-methyltransferase from Bacillus cereus (strain G9842).